The sequence spans 217 residues: Small ribosomal subunit protein uS3 (217 aa).

The region spanning Ile38 to Arg106 is the KH type-2 domain.

This sequence belongs to the universal ribosomal protein uS3 family. As to quaternary structure, part of the 30S ribosomal subunit. Forms a tight complex with proteins S10 and S14.

In terms of biological role, binds the lower part of the 30S subunit head. Binds mRNA in the 70S ribosome, positioning it for translation. The sequence is that of Small ribosomal subunit protein uS3 from Desulfotalea psychrophila (strain LSv54 / DSM 12343).